The chain runs to 203 residues: CASP-like protein 1B1 (203 aa).

Residues 1 to 24 are Cytoplasmic-facing; it reads MALVNAEKPEVGSSPSSLGPRNKS. Residues 25–45 form a helical membrane-spanning segment; the sequence is WVLLMLRFVAFLATAAATIVM. The Extracellular segment spans residues 46-76; it reads AANRETKTFVVATIGSTPIKATVTAKFQHTP. A helical transmembrane segment spans residues 77–97; that stretch reads AFVFFVIANGMGSIHNLVMIA. At 98–114 the chain is on the cytoplasmic side; it reads GDTFVRKFDYKGLRWVT. Residues 115 to 135 traverse the membrane as a helical segment; it reads VAILDMLTAALISGGVNAAVF. Residues 136-165 are Extracellular-facing; sequence MAELGKNGNSHAKWNKICDRFGSFCDHGGA. A helical membrane pass occupies residues 166-186; the sequence is AIIASFIGLLLMLVISIISII. Over 187–203 the chain is Cytoplasmic; sequence KLLKPKSPLVDSHVLAP.

The protein belongs to the Casparian strip membrane proteins (CASP) family. Homodimer and heterodimers.

It is found in the cell membrane. In Ricinus communis (Castor bean), this protein is CASP-like protein 1B1.